The primary structure comprises 102 residues: Small ribosomal subunit protein uS10 (102 aa).

It belongs to the universal ribosomal protein uS10 family. Part of the 30S ribosomal subunit.

Functionally, involved in the binding of tRNA to the ribosomes. This is Small ribosomal subunit protein uS10 from Chelativorans sp. (strain BNC1).